A 521-amino-acid polypeptide reads, in one-letter code: Bifunctional purine biosynthesis protein PurH (521 aa).

Residues 1-145 (MIKQALISVS…KNHRDVTVVV (145 aa)) enclose the MGS-like domain.

This sequence belongs to the PurH family.

The catalysed reaction is (6R)-10-formyltetrahydrofolate + 5-amino-1-(5-phospho-beta-D-ribosyl)imidazole-4-carboxamide = 5-formamido-1-(5-phospho-D-ribosyl)imidazole-4-carboxamide + (6S)-5,6,7,8-tetrahydrofolate. It carries out the reaction IMP + H2O = 5-formamido-1-(5-phospho-D-ribosyl)imidazole-4-carboxamide. The protein operates within purine metabolism; IMP biosynthesis via de novo pathway; 5-formamido-1-(5-phospho-D-ribosyl)imidazole-4-carboxamide from 5-amino-1-(5-phospho-D-ribosyl)imidazole-4-carboxamide (10-formyl THF route): step 1/1. It participates in purine metabolism; IMP biosynthesis via de novo pathway; IMP from 5-formamido-1-(5-phospho-D-ribosyl)imidazole-4-carboxamide: step 1/1. The polypeptide is Bifunctional purine biosynthesis protein PurH (Burkholderia orbicola (strain MC0-3)).